The sequence spans 350 residues: Paired box protein Pax-4 (350 aa).

The segment at residues 5-131 is a DNA-binding region (paired); that stretch reads GISSMNQLGG…SSINRVLRAL (127 aa). The PAI subdomain stretch occupies residues 8–64; it reads SMNQLGGLFVNGRPLPLDTRQQIVRLAVSGMRPCDISRILKVSNGCVSKILGRYYRT. The interval 83–131 is RED subdomain; that stretch reads PVVARIAQLKGECPALFAWEIQRQLCAEGLCTQDKTPSVSSINRVLRAL. Positions 153–172 are disordered; sequence LTPHSGSETPRGTHPGTGHR. The segment at residues 170–229 is a DNA-binding region (homeobox); the sequence is GHRNRTIFSPSQAEALEKEFQRGQYPDSVARGKLATATSLPEDTVRVWFSNRRAKWRRQE. A transcription repression region spans residues 278–350; the sequence is CYQLCWATAP…ATPTHFSHWP (73 aa).

It belongs to the paired homeobox family.

It localises to the nucleus. Plays an important role in the differentiation and development of pancreatic islet beta cells. Transcriptional repressor that binds to a common element in the glucagon, insulin and somatostatin promoters. Competes with PAX6 for this same promoter binding site. Isoform 2 appears to be a dominant negative form antagonizing PAX4 transcriptional activity. This Homo sapiens (Human) protein is Paired box protein Pax-4 (PAX4).